A 537-amino-acid polypeptide reads, in one-letter code: Chaperonin GroEL 2 (537 aa).

ATP-binding positions include 29–32 (TLGP), 86–90 (DGTTT), Gly-413, 477–479 (NAA), and Asp-493.

It belongs to the chaperonin (HSP60) family. Forms a cylinder of 14 subunits composed of two heptameric rings stacked back-to-back. Interacts with the co-chaperonin GroES.

It is found in the cytoplasm. The enzyme catalyses ATP + H2O + a folded polypeptide = ADP + phosphate + an unfolded polypeptide.. Together with its co-chaperonin GroES, plays an essential role in assisting protein folding. The GroEL-GroES system forms a nano-cage that allows encapsulation of the non-native substrate proteins and provides a physical environment optimized to promote and accelerate protein folding. This chain is Chaperonin GroEL 2, found in Thermobifida fusca (strain YX).